Consider the following 81-residue polypeptide: Small ribosomal subunit protein uS15 (81 aa).

Belongs to the universal ribosomal protein uS15 family. Part of the 30S ribosomal subunit. Forms a bridge to the 50S subunit in the 70S ribosome, contacting the 23S rRNA.

Its function is as follows. One of the primary rRNA binding proteins, it binds directly to 16S rRNA where it helps nucleate assembly of the platform of the 30S subunit by binding and bridging several RNA helices of the 16S rRNA. In terms of biological role, forms an intersubunit bridge (bridge B4) with the 23S rRNA of the 50S subunit in the ribosome. The chain is Small ribosomal subunit protein uS15 from Mesomycoplasma hyorhinis (Mycoplasma hyorhinis).